We begin with the raw amino-acid sequence, 377 residues long: Alanine racemase (377 aa).

Lys-37 functions as the Proton acceptor; specific for D-alanine in the catalytic mechanism. At Lys-37 the chain carries N6-(pyridoxal phosphate)lysine. Arg-135 is a binding site for substrate. The Proton acceptor; specific for L-alanine role is filled by Tyr-271. Residue Met-319 participates in substrate binding.

The protein belongs to the alanine racemase family. Pyridoxal 5'-phosphate serves as cofactor.

The catalysed reaction is L-alanine = D-alanine. It participates in amino-acid biosynthesis; D-alanine biosynthesis; D-alanine from L-alanine: step 1/1. In terms of biological role, catalyzes the interconversion of L-alanine and D-alanine. May also act on other amino acids. The sequence is that of Alanine racemase (alr) from Helicobacter pylori (strain HPAG1).